The following is a 1067-amino-acid chain: Cadmium/zinc-transporting ATPase HMA2 (1067 aa).

Positions 9-75 (QKSYFDVLGI…ALNQARLEAS (67 aa)) constitute an HMA domain. 8 consecutive transmembrane segments (helical) span residues 94–114 (YVLL…WHPL), 117–137 (FALV…IAAI), 140–160 (LTLD…ALKD), 162–182 (SEAG…TRAS), 313–333 (YTPA…IAKA), 342–362 (LALV…TPIA), 649–669 (IIVN…LAFA), and 673–693 (LIWA…MYSM). Disordered stretches follow at residues 711 to 739 (HHGS…HHCS), 760 to 790 (HDHH…SHGH), and 960 to 996 (NDTH…GHHP). Basic residues predominate over residues 724 to 735 (HGSHAKKNHGVS). Composition is skewed to basic and acidic residues over residues 760 to 774 (HDHH…EPAH) and 975 to 996 (SSDH…GHHP).

Belongs to the cation transport ATPase (P-type) (TC 3.A.3) family. Type IB subfamily. In terms of tissue distribution, in roots, localizes at the pericycle cells. In nodes, localizes in the phloem parenchyma and companion cells of both enlarged and diffuse vascular bundles.

The protein localises to the cell membrane. The catalysed reaction is Zn(2+)(in) + ATP + H2O = Zn(2+)(out) + ADP + phosphate + H(+). It catalyses the reaction Cd(2+)(in) + ATP + H2O = Cd(2+)(out) + ADP + phosphate + H(+). In terms of biological role, zinc/cadmium transporter that plays an essential role in promoting translocation of zinc and cadmium from roots to shoots. May control cadmium loading into xylem. In roots, transports zinc and cadmium from the apoplast to the symplast to facilitate translocation via the phloem. In nodes, functions to load zinc and cadmium to the phloem for the preferential distribution to the upper nodes and panicles. The chain is Cadmium/zinc-transporting ATPase HMA2 from Oryza sativa subsp. japonica (Rice).